Reading from the N-terminus, the 66-residue chain is Beta-toxin Cb2 (66 aa).

Residues 1–66 (KEGYLVDLHT…VWPLPNKRCK (66 aa)) form the LCN-type CS-alpha/beta domain. 4 disulfides stabilise this stretch: C12–C65, C16–C41, C25–C46, and C29–C48.

The protein belongs to the long (4 C-C) scorpion toxin superfamily. Sodium channel inhibitor family. Beta subfamily. As to expression, expressed by the venom gland.

It localises to the secreted. Beta toxins bind voltage-independently at site-4 of sodium channels (Nav) and reduces peak current and shifts the voltage of activation toward more negative potentials thereby affecting sodium channel activation and promoting spontaneous and repetitive firing. Has an inhibitory effect on voltage-gated sodium channel hNav1.6/SCN8A, affecting both the activation and inactivation processes. Also reduces the peak current of hNav1.5/SCN5A but does not shift its voltage of activation. This toxin is active against mammals and lethal to mice. The chain is Beta-toxin Cb2 from Centruroides baergi (Scorpion).